Consider the following 66-residue polypeptide: ATP synthase F(0) complex subunit 8 (66 aa).

At M1 the chain carries N-formylmethionine. Residues 8–24 form a helical membrane-spanning segment; that stretch reads TWLTMILSMFLTLFIIF. N6-acetyllysine; alternate is present on K54. An N6-succinyllysine; alternate modification is found at K54. K57 carries the post-translational modification N6-acetyllysine.

The protein belongs to the ATPase protein 8 family. Component of the ATP synthase complex composed at least of ATP5F1A/subunit alpha, ATP5F1B/subunit beta, ATP5MC1/subunit c (homooctomer), MT-ATP6/subunit a, MT-ATP8/subunit 8, ATP5ME/subunit e, ATP5MF/subunit f, ATP5MG/subunit g, ATP5MK/subunit k, ATP5MJ/subunit j, ATP5F1C/subunit gamma, ATP5F1D/subunit delta, ATP5F1E/subunit epsilon, ATP5PF/subunit F6, ATP5PB/subunit b, ATP5PD/subunit d, ATP5PO/subunit OSCP. ATP synthase complex consists of a soluble F(1) head domain (subunits alpha(3) and beta(3)) - the catalytic core - and a membrane F(0) domain - the membrane proton channel (subunits c, a, 8, e, f, g, k and j). These two domains are linked by a central stalk (subunits gamma, delta, and epsilon) rotating inside the F1 region and a stationary peripheral stalk (subunits F6, b, d, and OSCP). Interacts with PRICKLE3.

It localises to the mitochondrion membrane. Functionally, subunit 8, of the mitochondrial membrane ATP synthase complex (F(1)F(0) ATP synthase or Complex V) that produces ATP from ADP in the presence of a proton gradient across the membrane which is generated by electron transport complexes of the respiratory chain. ATP synthase complex consist of a soluble F(1) head domain - the catalytic core - and a membrane F(1) domain - the membrane proton channel. These two domains are linked by a central stalk rotating inside the F(1) region and a stationary peripheral stalk. During catalysis, ATP synthesis in the catalytic domain of F(1) is coupled via a rotary mechanism of the central stalk subunits to proton translocation. In vivo, can only synthesize ATP although its ATP hydrolase activity can be activated artificially in vitro. Part of the complex F(0) domain. This chain is ATP synthase F(0) complex subunit 8, found in Bos taurus (Bovine).